An 86-amino-acid chain; its full sequence is Small ribosomal subunit protein bS16 (86 aa).

Belongs to the bacterial ribosomal protein bS16 family.

The chain is Small ribosomal subunit protein bS16 from Hamiltonella defensa subsp. Acyrthosiphon pisum (strain 5AT).